Here is a 160-residue protein sequence, read N- to C-terminus: Eukaryotic translation initiation factor 5A (160 aa).

The segment covering 1 to 13 has biased composition (basic and acidic residues); that stretch reads MSDSEEHHFESKA. Residues 1–22 form a disordered region; sequence MSDSEEHHFESKADAGASKTYP. Hypusine is present on Lys53.

Belongs to the eIF-5A family. Lys-53 undergoes hypusination, a unique post-translational modification that consists in the addition of a butylamino group from spermidine to lysine side chain, leading to the formation of the unusual amino acid hypusine. eIF-5As are the only known proteins to undergo this modification, which is essential for their function.

Functionally, translation factor that promotes translation elongation and termination, particularly upon ribosome stalling at specific amino acid sequence contexts. Binds between the exit (E) and peptidyl (P) site of the ribosome and promotes rescue of stalled ribosome: specifically required for efficient translation of polyproline-containing peptides as well as other motifs that stall the ribosome. Acts as a ribosome quality control (RQC) cofactor by joining the RQC complex to facilitate peptidyl transfer during CAT tailing step. The sequence is that of Eukaryotic translation initiation factor 5A (TIF5A) from Zea mays (Maize).